A 616-amino-acid polypeptide reads, in one-letter code: Dihydroxy-acid dehydratase (616 aa).

D81 provides a ligand contact to Mg(2+). C122 lines the [2Fe-2S] cluster pocket. Mg(2+)-binding residues include D123 and K124. K124 is subject to N6-carboxylysine. C195 provides a ligand contact to [2Fe-2S] cluster. E491 provides a ligand contact to Mg(2+). The active-site Proton acceptor is S517.

It belongs to the IlvD/Edd family. Homodimer. The cofactor is [2Fe-2S] cluster. Mg(2+) serves as cofactor.

The catalysed reaction is (2R)-2,3-dihydroxy-3-methylbutanoate = 3-methyl-2-oxobutanoate + H2O. It catalyses the reaction (2R,3R)-2,3-dihydroxy-3-methylpentanoate = (S)-3-methyl-2-oxopentanoate + H2O. It participates in amino-acid biosynthesis; L-isoleucine biosynthesis; L-isoleucine from 2-oxobutanoate: step 3/4. Its pathway is amino-acid biosynthesis; L-valine biosynthesis; L-valine from pyruvate: step 3/4. In terms of biological role, functions in the biosynthesis of branched-chain amino acids. Catalyzes the dehydration of (2R,3R)-2,3-dihydroxy-3-methylpentanoate (2,3-dihydroxy-3-methylvalerate) into 2-oxo-3-methylpentanoate (2-oxo-3-methylvalerate) and of (2R)-2,3-dihydroxy-3-methylbutanoate (2,3-dihydroxyisovalerate) into 2-oxo-3-methylbutanoate (2-oxoisovalerate), the penultimate precursor to L-isoleucine and L-valine, respectively. The chain is Dihydroxy-acid dehydratase from Yersinia enterocolitica serotype O:8 / biotype 1B (strain NCTC 13174 / 8081).